We begin with the raw amino-acid sequence, 498 residues long: Glycerol kinase (498 aa).

Thr13 lines the ADP pocket. 3 residues coordinate ATP: Thr13, Thr14, and Ser15. Thr13 is a binding site for sn-glycerol 3-phosphate. Arg17 lines the ADP pocket. Sn-glycerol 3-phosphate contacts are provided by Arg83, Glu84, Tyr135, and Asp244. Glycerol is bound by residues Arg83, Glu84, Tyr135, Asp244, and Gln245. Thr266 and Gly309 together coordinate ADP. Positions 266, 309, 313, and 410 each coordinate ATP. ADP-binding residues include Gly410 and Asn414.

This sequence belongs to the FGGY kinase family.

The catalysed reaction is glycerol + ATP = sn-glycerol 3-phosphate + ADP + H(+). The protein operates within polyol metabolism; glycerol degradation via glycerol kinase pathway; sn-glycerol 3-phosphate from glycerol: step 1/1. Its activity is regulated as follows. Inhibited by fructose 1,6-bisphosphate (FBP). In terms of biological role, key enzyme in the regulation of glycerol uptake and metabolism. Catalyzes the phosphorylation of glycerol to yield sn-glycerol 3-phosphate. This chain is Glycerol kinase, found in Koribacter versatilis (strain Ellin345).